An 880-amino-acid chain; its full sequence is Probable dipeptidyl-aminopeptidase B (880 aa).

The segment covering 1–26 has biased composition (basic and acidic residues); sequence MPRQRAPKEEEAELLTKQERSARSSE. A disordered region spans residues 1-71; it reads MPRQRAPKEE…KYTDEDDEAQ (71 aa). Topologically, residues 1–93 are cytoplasmic; it reads MPRQRAPKEE…PISVDKKTRR (93 aa). The segment covering 30 to 40 has biased composition (low complexity); sequence DTSISSISTTS. A helical; Signal-anchor for type II membrane protein transmembrane segment spans residues 94–114; it reads WLWIVGIACVTGWALALVFFL. Residues 115-880 are Vacuolar-facing; it reads MSGSYKHVST…AQVDARMERR (766 aa). A glycan (N-linked (GlcNAc...) asparagine) is linked at Asn-533. Ser-724 functions as the Charge relay system in the catalytic mechanism. A glycan (N-linked (GlcNAc...) asparagine) is linked at Asn-778. Active-site charge relay system residues include Asp-801 and His-834.

Belongs to the peptidase S9B family.

Its subcellular location is the vacuole membrane. The enzyme catalyses Release of an N-terminal dipeptide, Xaa-Yaa-|-Zaa-, from a polypeptide, preferentially when Yaa is Pro, provided Zaa is neither Pro nor hydroxyproline.. Its function is as follows. Type IV dipeptidyl-peptidase which removes N-terminal dipeptides sequentially from polypeptides having unsubstituted N-termini provided that the penultimate residue is proline. The chain is Probable dipeptidyl-aminopeptidase B (dapB) from Pyrenophora tritici-repentis (strain Pt-1C-BFP) (Wheat tan spot fungus).